The chain runs to 334 residues: Ephrin-B1 (334 aa).

The first 25 residues, 1–25, serve as a signal peptide directing secretion; that stretch reads MARPRGGRWLLGVLLALCRLAAPLA. Residues 26-160 enclose the Ephrin RBD domain; it reads KSLEPVSWSA…TRSMKIVMKV (135 aa). The Extracellular segment spans residues 26-231; sequence KSLEPVSWSA…FLSSKVAVFA (206 aa). Cystine bridges form between Cys60/Cys97 and Cys85/Cys149. N-linked (GlcNAc...) asparagine glycosylation occurs at Asn135. The disordered stretch occupies residues 175 to 218; that stretch reads SRPSKEADNTVKIVTQSPRHKVPTVEEPGKPGSVNQNGQETQGP. Residues 207 to 218 show a composition bias toward polar residues; the sequence is SVNQNGQETQGP. Residues 232-252 form a helical membrane-spanning segment; sequence AIGAGCVIFILIIIFLVVLLI. Residues 253–334 are Cytoplasmic-facing; that stretch reads KIRKRHRKHT…QSPANIYYKV (82 aa). A PDZ-binding motif is present at residues 332 to 334; the sequence is YKV.

It belongs to the ephrin family. As to quaternary structure, binds to the receptor tyrosine kinase EPHB2. Interacts with GRIP1 and GRIP2. In terms of processing, inducible phosphorylation of tyrosine residues in the cytoplasmic domain.

It localises to the membrane. Cell surface transmembrane ligand for Eph receptors, a family of receptor tyrosine kinases which are crucial for migration, repulsion and adhesion during neuronal, vascular and epithelial development. Binds promiscuously Eph receptors residing on adjacent cells, leading to contact-dependent bidirectional signaling into neighboring cells. The signaling pathway downstream of the receptor is referred to as forward signaling while the signaling pathway downstream of the ephrin ligand is referred to as reverse signaling. The sequence is that of Ephrin-B1 (EFNB1) from Gallus gallus (Chicken).